The primary structure comprises 647 residues: MQRREFFQHFLKRAGIGAGALGAATAGLVGYYQPRKEVFDTSGKNNDELAEKLTTPKKAVVIGGGLAGISSALELARRNFEVTLVEASPSLGGKLTGWSIEALGEQFPVEHGFHGFFDQYYNLNEMFASAGIGSDMFTASPGYPVIFSDRQVEVFGQTPKWFPFNILSVVQQSKRLDIMSFLKDYPGLWPVISMFRYQYDRTFRDWDSIDFMTYCRRGEVLPAFIDTVLHPFSDATMNRMEVLSAAEAMRYFHFYFMGSPEGLAFRIITKDCMSALIEPLERKMTSLGVRVLKGRKAQNLVMQDGRVTAVRLDGAGAANGEVASIPKREVPVTGWLQHMSDAGIPVLVARRGASWVALDGRCTHMGCPVAPEVSTGGFHCPCHDGRFNAEGLPVSGPPKAPLPRLDVREAGEMLVIGQASSSSSPVVVTAEELPCDYCVVASGVRGTRELIALTRPGNSGFAGQVAALGEADPYVVWRVWLDRPLPSADFPFYTVSGYTYTDSITFYSSFQQPFIDWAKRTGGCVVELHAYAVAPQDVRPEPEIRATMLQELHAMFPESKNATIRHEIFMMQSNFTRWAPGDHAKRPGVETPYANLFLAGDWVSTKAPVFLMEAAVFTGRMAANAISAKESLRQKPLPIVPMNGIFA.

FAD contacts are provided by residues Ala67, Glu86 to Ala87, Lys94, and Tyr120. One can recognise a Rieske domain in the interval Val322–Ile416. [2Fe-2S] cluster contacts are provided by Cys362, His364, Cys380, and His383. Residues Asp601 and Met612 each coordinate FAD.

The protein belongs to the carotenoid/retinoid oxidoreductase family. It depends on FAD as a cofactor. The cofactor is [2Fe-2S] cluster.

The enzyme catalyses a carotenoid beta-end derivative + 2 A = a carotenoid phi-end derivative + 2 AH2. It participates in carotenoid biosynthesis. Involved in the biosynthesis of chlorobactene, a carotenoid with aromatic end group. Catalyzes the introduction of two additional double bonds into the ionone ring of gamma-carotene to produce chlorobactene. The reaction includes an intramolecular methyl transfer from position C1 to position C2 of the ring. The chain is Carotenoid phi-ring synthase from Chlorobaculum tepidum (strain ATCC 49652 / DSM 12025 / NBRC 103806 / TLS) (Chlorobium tepidum).